The following is a 487-amino-acid chain: Betaine aldehyde dehydrogenase (487 aa).

Residues Ile-27 and Asp-93 each coordinate K(+). 149-151 (GAW) provides a ligand contact to NAD(+). Lys-161 (charge relay system) is an active-site residue. NAD(+) is bound by residues 175–178 (KPSE) and 228–231 (SVPT). Leu-243 is a K(+) binding site. Residue Glu-249 is the Proton acceptor of the active site. The NAD(+) site is built by Gly-251, Cys-283, and Glu-384. The active-site Nucleophile is Cys-283. Cysteine sulfenic acid (-SOH) is present on Cys-283. 2 residues coordinate K(+): Lys-454 and Gly-457. Glu-461 functions as the Charge relay system in the catalytic mechanism.

The protein belongs to the aldehyde dehydrogenase family. Dimer of dimers. The cofactor is K(+).

The catalysed reaction is betaine aldehyde + NAD(+) + H2O = glycine betaine + NADH + 2 H(+). Its pathway is amine and polyamine biosynthesis; betaine biosynthesis via choline pathway; betaine from betaine aldehyde: step 1/1. Involved in the biosynthesis of the osmoprotectant glycine betaine. Catalyzes the irreversible oxidation of betaine aldehyde to the corresponding acid. This chain is Betaine aldehyde dehydrogenase, found in Brucella canis (strain ATCC 23365 / NCTC 10854 / RM-666).